The primary structure comprises 317 residues: Aspartate carbamoyltransferase catalytic subunit (317 aa).

Carbamoyl phosphate-binding residues include R66 and T67. Residue K94 coordinates L-aspartate. R116, H144, and Q147 together coordinate carbamoyl phosphate. R177 and R231 together coordinate L-aspartate. The carbamoyl phosphate site is built by G272 and P273.

It belongs to the aspartate/ornithine carbamoyltransferase superfamily. ATCase family. In terms of assembly, heterododecamer (2C3:3R2) of six catalytic PyrB chains organized as two trimers (C3), and six regulatory PyrI chains organized as three dimers (R2).

It catalyses the reaction carbamoyl phosphate + L-aspartate = N-carbamoyl-L-aspartate + phosphate + H(+). Its pathway is pyrimidine metabolism; UMP biosynthesis via de novo pathway; (S)-dihydroorotate from bicarbonate: step 2/3. Its function is as follows. Catalyzes the condensation of carbamoyl phosphate and aspartate to form carbamoyl aspartate and inorganic phosphate, the committed step in the de novo pyrimidine nucleotide biosynthesis pathway. The polypeptide is Aspartate carbamoyltransferase catalytic subunit (Rhodopseudomonas palustris (strain BisB5)).